The following is a 95-amino-acid chain: Endoribonuclease VapD homolog (95 aa).

This sequence belongs to the VapD ribonuclease family. Homodimer.

In terms of biological role, cleaves ssRNA, mostly between U:A. This chain is Endoribonuclease VapD homolog, found in Helicobacter pylori (strain ATCC 700392 / 26695) (Campylobacter pylori).